We begin with the raw amino-acid sequence, 436 residues long: Mitochondrial distribution and morphology protein 12 (436 aa).

Positions 1–436 constitute an SMP-LTD domain; the sequence is MSIEVNWGTA…VFPSFYTFLI (436 aa). Positions 73–84 are enriched in acidic residues; that stretch reads DEDGDSGSEISE. Disordered regions lie at residues 73 to 98, 184 to 275, and 352 to 380; these read DEDG…WDRT, AVAG…RMRE, and GSGS…PHQK. Over residues 85–98 the composition is skewed to basic and acidic residues; it reads ELQHRTHDNPWDRT. Polar residues-rich tracts occupy residues 190–206 and 222–243; these read PFTT…QGNK and DSSN…SNRS. Residues 244–255 are compositionally biased toward basic and acidic residues; that stretch reads SHPDGHPEHNDD. The segment covering 256-267 has biased composition (polar residues); it reads PISSSENPLLQN.

It belongs to the MDM12 family. As to quaternary structure, component of the ER-mitochondria encounter structure (ERMES) or MDM complex, composed of mmm1, mdm10, mdm12 and mdm34. A mmm1 homodimer associates with one molecule of mdm12 on each side in a pairwise head-to-tail manner, and the SMP-LTD domains of mmm1 and mdm12 generate a continuous hydrophobic tunnel for phospholipid trafficking.

It is found in the mitochondrion outer membrane. It localises to the endoplasmic reticulum membrane. Component of the ERMES/MDM complex, which serves as a molecular tether to connect the endoplasmic reticulum (ER) and mitochondria. Components of this complex are involved in the control of mitochondrial shape and protein biogenesis, and function in nonvesicular lipid trafficking between the ER and mitochondria. Mdm12 is required for the interaction of the ER-resident membrane protein mmm1 and the outer mitochondrial membrane-resident beta-barrel protein mdm10. The mdm12-mmm1 subcomplex functions in the major beta-barrel assembly pathway that is responsible for biogenesis of all mitochondrial outer membrane beta-barrel proteins, and acts in a late step after the SAM complex. The mdm10-mdm12-mmm1 subcomplex further acts in the TOM40-specific pathway after the action of the mdm12-mmm1 complex. Essential for establishing and maintaining the structure of mitochondria and maintenance of mtDNA nucleoids. The polypeptide is Mitochondrial distribution and morphology protein 12 (Emericella nidulans (strain FGSC A4 / ATCC 38163 / CBS 112.46 / NRRL 194 / M139) (Aspergillus nidulans)).